Consider the following 291-residue polypeptide: D-alanine--D-alanine ligase (291 aa).

In terms of domain architecture, ATP-grasp spans 99-291; sequence KRIVKSLGIN…FKKLISIIIT (193 aa). 125-179 is an ATP binding site; sequence EWNKFPAVVKPVREGSSVGLKIVESLEELKEYALDLLKKTERVMVEEFVEGRDMT. The Mg(2+) site is built by Asp-245, Glu-258, and Asn-260.

It belongs to the D-alanine--D-alanine ligase family. The cofactor is Mg(2+). Mn(2+) serves as cofactor.

The protein localises to the cytoplasm. The enzyme catalyses 2 D-alanine + ATP = D-alanyl-D-alanine + ADP + phosphate + H(+). Its pathway is cell wall biogenesis; peptidoglycan biosynthesis. In terms of biological role, cell wall formation. The chain is D-alanine--D-alanine ligase from Aquifex aeolicus (strain VF5).